A 200-amino-acid chain; its full sequence is TATA-box-binding protein 2 (200 aa).

Tandem repeats lie at residues 25 to 101 (LQNI…ARII) and 115 to 192 (IQNI…YPVL).

It belongs to the TBP family. As to quaternary structure, belongs to the TFIID complex together with the TBP-associated factors (TAFs). Binds DNA as monomer.

Its subcellular location is the nucleus. General transcription factor that functions at the core of the DNA-binding multiprotein factor TFIID. Binding of TFIID to the TATA box is the initial transcriptional step of the pre-initiation complex (PIC), playing a role in the activation of eukaryotic genes transcribed by RNA polymerase II. This is TATA-box-binding protein 2 (TBP2) from Zea mays (Maize).